Here is an 819-residue protein sequence, read N- to C-terminus: Leucine--tRNA ligase (819 aa).

Positions 40 to 51 match the 'HIGH' region motif; it reads PYPSGAGLHVGH. The 'KMSKS' region motif lies at 600 to 604; it reads KMSKS. Position 603 (Lys-603) interacts with ATP.

The protein belongs to the class-I aminoacyl-tRNA synthetase family.

The protein localises to the cytoplasm. The catalysed reaction is tRNA(Leu) + L-leucine + ATP = L-leucyl-tRNA(Leu) + AMP + diphosphate. The polypeptide is Leucine--tRNA ligase (Chlamydia muridarum (strain MoPn / Nigg)).